A 323-amino-acid polypeptide reads, in one-letter code: Beta-ketoacyl-[acyl-carrier-protein] synthase III (323 aa).

Catalysis depends on residues Cys-113 and His-250. The ACP-binding stretch occupies residues 251 to 255 (QANKR). The active site involves Asn-280.

The protein belongs to the thiolase-like superfamily. FabH family. In terms of assembly, homodimer.

The protein localises to the cytoplasm. It carries out the reaction malonyl-[ACP] + acetyl-CoA + H(+) = 3-oxobutanoyl-[ACP] + CO2 + CoA. It participates in lipid metabolism; fatty acid biosynthesis. Functionally, catalyzes the condensation reaction of fatty acid synthesis by the addition to an acyl acceptor of two carbons from malonyl-ACP. Catalyzes the first condensation reaction which initiates fatty acid synthesis and may therefore play a role in governing the total rate of fatty acid production. Possesses both acetoacetyl-ACP synthase and acetyl transacylase activities. Its substrate specificity determines the biosynthesis of branched-chain and/or straight-chain of fatty acids. The protein is Beta-ketoacyl-[acyl-carrier-protein] synthase III of Mesorhizobium japonicum (strain LMG 29417 / CECT 9101 / MAFF 303099) (Mesorhizobium loti (strain MAFF 303099)).